The sequence spans 476 residues: Retinoic acid receptor gamma (476 aa).

The modulating stretch occupies residues 1–109 (MANSSKERLC…PPPPPRVYKP (109 aa)). The segment covering 81 to 96 (STVETQSTSSEEMVPS) has biased composition (low complexity). The segment at 81–102 (STVETQSTSSEEMVPSSPSPPP) is disordered. NR C4-type zinc fingers lie at residues 110 to 130 (CFVC…CEGC) and 146 to 170 (CHRD…LQKC). A DNA-binding region (nuclear receptor) is located at residues 110 to 175 (CFVCNDKSSG…RLQKCFQVGM (66 aa)). The segment at 176-205 (SKEAVRNDRNKKKKEIKEEVVLPDSYEMPP) is hinge. The short motif at 184 to 189 (RNKKKK) is the Nuclear localization signal element. The NR LBD domain occupies 206–440 (EMEELIQKVS…PLIREMLENP (235 aa)). The tract at residues 435–476 (EMLENPEAFEDGAATPKPSERSSSESSNGSPTGEDSSGSKTP) is disordered. A compositionally biased stretch (polar residues) spans 462-476 (NGSPTGEDSSGSKTP).

It belongs to the nuclear hormone receptor family. NR1 subfamily. Heterodimer; with a rxr molecule. Binds DNA preferentially as a rar/rxr heterodimer. Expressed in embryos, tadpoles and various adult tissue such as kidney, testis, brain, liver, skeletal muscle and spleen.

The protein resides in the nucleus. Receptor for retinoic acid. Retinoic acid receptors bind as heterodimers to their target response elements in response to their ligands, all-trans or 9-cis retinoic acid, and regulate gene expression in various biological processes. The rar/rxr heterodimers bind to the retinoic acid response elements (RARE) composed of tandem 5'-AGGTCA-3' sites known as DR1-DR5. This chain is Retinoic acid receptor gamma (rarg), found in Xenopus laevis (African clawed frog).